The following is a 346-amino-acid chain: N(4)-(beta-N-acetylglucosaminyl)-L-asparaginase (346 aa).

The first 23 residues, M1–G23, serve as a signal peptide directing secretion. An N-linked (GlcNAc...) asparagine glycan is attached at N38. 2 cysteine pairs are disulfide-bonded: C64-C69 and C163-C179. T206 (nucleophile) is an active-site residue. Residues R234–D237 and T257–G260 contribute to the substrate site. C286 and C306 are disulfide-bonded. N310 is a glycosylation site (N-linked (GlcNAc...) asparagine). A disulfide bridge connects residues C317 and C345.

This sequence belongs to the Ntn-hydrolase family. In terms of assembly, heterotetramer of two alpha and two beta chains arranged as a dimer of alpha/beta heterodimers. Post-translationally, cleaved into an alpha and beta chain by autocatalysis; this activates the enzyme. The N-terminal residue of the beta subunit is responsible for the nucleophile hydrolase activity. N-glycosylated.

Its subcellular location is the lysosome. It catalyses the reaction N(4)-(beta-N-acetyl-D-glucosaminyl)-L-asparagine + H2O = N-acetyl-beta-D-glucosaminylamine + L-aspartate + H(+). Functionally, cleaves the GlcNAc-Asn bond which joins oligosaccharides to the peptide of asparagine-linked glycoproteins. The protein is N(4)-(beta-N-acetylglucosaminyl)-L-asparaginase (Aga) of Mus musculus (Mouse).